A 481-amino-acid chain; its full sequence is Cytochrome P450 monooygenase 2 (481 aa).

A helical transmembrane segment spans residues 12–32 (GSQLLPFYIAIFVFTLVPWAI). Cys418 lines the heme pocket.

It belongs to the cytochrome P450 family. Heme serves as cofactor.

The protein localises to the membrane. It functions in the pathway plant hormone biosynthesis; gibberellin biosynthesis. Functionally, gibberellin 20-oxidase; part of the gene cluster that mediates the biosynthesis of gibberellins (GAs), diterpenoids that may provide a selective advantage during infection of the preferred host plant, rice. Gibberellins (GAs) are diterpenoids and are synthesized via the mevalonate pathway. Biosynthesis of the major metabolite GA3 (gibberellic acid) from geranylgeranyl diphosphate (GGPP) requires 13 steps. The GGPP produced by the geranylgeranyl diphosphate synthase GGS2 is converted to ent-kaurene via ent-copalyldiphosphate in a two-step cyclization reaction performed by the bifunctional ent-copalyl diphosphate synthase/ent-kaurene synthase enzyme (CPS/KS). Ent-Kaurene is metabolized to GAs by a series of oxidation reactions catalyzed by cytochrome P450 monooxygenases. Cytochrome P450 monooxygenase P450-4 is an ent-kaurene oxidase that catalyzes the three oxidation steps between ent-kaurene and ent-kaurenoic acid. The highly multifunctional cytochrome P450 monooxygenase P450-1 then catalyzes four steps involving oxidation at two carbon atoms, in the main pathway from ent-kaurenoic acid to GA14 via GA12-aldehyde as well as producing kaurenolides and fujenoic acids as by-products. The cytochrome P450 monooxygenase P450-2 then converts GA14 to GA4 by removal of C-20. GA4 is further converted to GA7 by the GA4 desaturase DES via 1,2-desaturation before cytochrome P450 monooxygenase P450-3, a 13-hydroxylase, hydroxylates GA7 to GA3, the final product of the GA-biosynthetic pathway. The sequence is that of Cytochrome P450 monooygenase 2 from Gibberella fujikuroi (strain CBS 195.34 / IMI 58289 / NRRL A-6831) (Bakanae and foot rot disease fungus).